Consider the following 276-residue polypeptide: Putative respiratory nitrate reductase heme subunit ORF7 (276 aa).

Heme b contacts are provided by Met138 and Lys228.

Probable multiprotein complex; a catalytic heterodimer of an alpha and beta chain is proposed to associate with additional subunits involved in membrane attachment and electron transfer. The cofactor is heme b.

It is found in the cell membrane. The respiratory membrane-bound nitrate reductase enzyme complex plays a role in generation of metabolic energy by using nitrate as a terminal electron acceptor during anaerobic conditions. May transfer electrons to the iron-sulfur centers of the catalytic beta subunit. The protein is Putative respiratory nitrate reductase heme subunit ORF7 of Haloferax mediterranei (strain ATCC 33500 / DSM 1411 / JCM 8866 / NBRC 14739 / NCIMB 2177 / R-4) (Halobacterium mediterranei).